We begin with the raw amino-acid sequence, 291 residues long: 3-methyl-2-oxobutanoate hydroxymethyltransferase (291 aa).

Positions 1-10 (MTQLSAAQTP) are enriched in polar residues. Residues 1-20 (MTQLSAAQTPQPKPADGNRA) are disordered. Residues Asp-71 and Asp-110 each coordinate Mg(2+). Residues 71–72 (DS), Asp-110, and Lys-140 contribute to the 3-methyl-2-oxobutanoate site. Glu-142 is a binding site for Mg(2+). Catalysis depends on Glu-208, which acts as the Proton acceptor.

This sequence belongs to the PanB family. Homodecamer; pentamer of dimers. The cofactor is Mg(2+).

Its subcellular location is the cytoplasm. It catalyses the reaction 3-methyl-2-oxobutanoate + (6R)-5,10-methylene-5,6,7,8-tetrahydrofolate + H2O = 2-dehydropantoate + (6S)-5,6,7,8-tetrahydrofolate. The protein operates within cofactor biosynthesis; (R)-pantothenate biosynthesis; (R)-pantoate from 3-methyl-2-oxobutanoate: step 1/2. In terms of biological role, catalyzes the reversible reaction in which hydroxymethyl group from 5,10-methylenetetrahydrofolate is transferred onto alpha-ketoisovalerate to form ketopantoate. This chain is 3-methyl-2-oxobutanoate hydroxymethyltransferase, found in Streptomyces coelicolor (strain ATCC BAA-471 / A3(2) / M145).